The chain runs to 488 residues: Protein nucleotidyltransferase YdiU (488 aa).

ATP contacts are provided by G91, G93, R94, K114, D126, G127, R177, and R184. D253 functions as the Proton acceptor in the catalytic mechanism. The Mg(2+) site is built by N254 and D263. D263 contacts ATP.

The protein belongs to the SELO family. Mg(2+) is required as a cofactor. Mn(2+) serves as cofactor.

It carries out the reaction L-seryl-[protein] + ATP = 3-O-(5'-adenylyl)-L-seryl-[protein] + diphosphate. The catalysed reaction is L-threonyl-[protein] + ATP = 3-O-(5'-adenylyl)-L-threonyl-[protein] + diphosphate. The enzyme catalyses L-tyrosyl-[protein] + ATP = O-(5'-adenylyl)-L-tyrosyl-[protein] + diphosphate. It catalyses the reaction L-histidyl-[protein] + UTP = N(tele)-(5'-uridylyl)-L-histidyl-[protein] + diphosphate. It carries out the reaction L-seryl-[protein] + UTP = O-(5'-uridylyl)-L-seryl-[protein] + diphosphate. The catalysed reaction is L-tyrosyl-[protein] + UTP = O-(5'-uridylyl)-L-tyrosyl-[protein] + diphosphate. Functionally, nucleotidyltransferase involved in the post-translational modification of proteins. It can catalyze the addition of adenosine monophosphate (AMP) or uridine monophosphate (UMP) to a protein, resulting in modifications known as AMPylation and UMPylation. The protein is Protein nucleotidyltransferase YdiU of Bacillus cereus (strain B4264).